The primary structure comprises 445 residues: Ktr system potassium uptake protein B (445 aa).

12 consecutive transmembrane segments (helical) span residues 19–39, 46–66, 79–99, 127–147, 161–181, 196–216, 230–250, 286–306, 313–333, 351–371, 377–397, and 408–428; these read VLAI…MLPI, SWID…LAVV, VIMG…VLIV, IGLV…AALI, GLFA…FSLW, LVIT…FDVM, LMLT…FILE, FGSM…IGAG, GIKL…LRGK, ALAV…ALTI, FLQI…TMGL, and IIIV…FSFA.

It belongs to the TrkH potassium transport family. Ktr (TC 2.A.38.4) subfamily. As to quaternary structure, homodimer. Part of the KtrAB complex formed by an octameric catalytic ring of KtrA and a membrane associated dimer of KtrB forming a potassium channel.

The protein resides in the cell membrane. In terms of biological role, integral membrane subunit of the KtrAB potassium uptake transporter. The 2 major potassium transporter complexes KtrAB and KtrCD confer resistance to both suddenly imposed and prolonged osmotic stress. This chain is Ktr system potassium uptake protein B (ktrB), found in Bacillus subtilis (strain 168).